We begin with the raw amino-acid sequence, 537 residues long: MHFSLKQLAVAAFYATNLGSAYVIPQFFQEAFQQEEPIENYLPQLNDDDSSAVAANIPKPHIPYFMKPHVESEKLQDKIKVDDLNATAWDLYRLANYSTPDYGHPTRVIGSKGHNKTMEYILNVFDDMQDYYDVSLQEFEALSGKIISFNLSDAETGKSFANTTAFALSPPVDGFVGKLVEIPNLGCEEKDYASVVPPRHNEKQIALIERGKCPFGDKSNLAGKFGFTAVVIYDNEPKSKEGLHGTLGEPTKHTVATVGVPYKVGKKLIANIALNIDYSLYFAMDSYVEFIKTQNIIADTKHGDPDNIVALGAHSDSVEEGPGINDDGSGTISLLNVAKQLTHFKINNKVRFAWWAAEEEGLLGSNFYAYNLTKEENSKIRVFMDYDMMASPNYEYEIYDANNKENPKGSEELKNLYVDYYKAHHLNYTLVPFDGRSDYVGFINNGIPAGGIATGAEKNNVNNGKVLDRCYHQLCDDVSNLSWDAFITNTKLIAHSVATYADSFEGFPKRETQKHKEVDILNAQQPQFKYRADFLII.

An N-terminal signal peptide occupies residues 1 to 21 (MHFSLKQLAVAAFYATNLGSA). The propeptide occupies 22-56 (YVIPQFFQEAFQQEEPIENYLPQLNDDDSSAVAAN). Residues Asn-85, Asn-96, Asn-115, Asn-150, and Asn-162 are each glycosylated (N-linked (GlcNAc...) asparagine). The Zn(2+) site is built by His-314 and Asp-326. Glu-358 (proton acceptor) is an active-site residue. Position 359 (Glu-359) interacts with Zn(2+). An N-linked (GlcNAc...) asparagine glycan is attached at Asn-371. Asp-387 contributes to the Zn(2+) binding site. Asn-427 carries N-linked (GlcNAc...) asparagine glycosylation. Zn(2+) is bound at residue His-472. A glycan (N-linked (GlcNAc...) asparagine) is linked at Asn-480.

It belongs to the peptidase M28 family. M28A subfamily. Monomer. It depends on Zn(2+) as a cofactor.

The protein localises to the vacuole. The enzyme catalyses Preferentially, release of N-terminal lysine.. This chain is Aminopeptidase Y (APE3), found in Saccharomyces cerevisiae (strain ATCC 204508 / S288c) (Baker's yeast).